The sequence spans 101 residues: Iron-sulfur cluster assembly protein CyaY (101 aa).

It belongs to the frataxin family.

Its function is as follows. Involved in iron-sulfur (Fe-S) cluster assembly. May act as a regulator of Fe-S biogenesis. This Rickettsia akari (strain Hartford) protein is Iron-sulfur cluster assembly protein CyaY.